The chain runs to 321 residues: MGEWTILERLLEAAVQQHSTMIGRILLTVVVIFRILIVAIVGETVYDDEQTMFVCNTLQPGCNQACYDRAFPISHIRYWVFQIIMVCTPSLCFITYSVHQSAKQRERRYSTVFLALDRDPPESMGGPGGTGGGGSGGGKREDKKLQNAIVNGVLQNTENTSKETEPDCLEVKELTPHPSGLRTASRSKLRRQEGISRFYIIQVVFRNALEIGFLVGQYFLYGFSVPGLYECDRYPCIKEVECYVSRPTEKTVFLVFMFAVSGICVVLNLAELNHLGWRKIKLAVRGAQAKRKSVYEIRNKDLPRVSVPNFGRTQSSDSAYV.

Residues 1 to 19 (MGEWTILERLLEAAVQQHS) are Cytoplasmic-facing. A helical transmembrane segment spans residues 20 to 42 (TMIGRILLTVVVIFRILIVAIVG). At 43–75 (ETVYDDEQTMFVCNTLQPGCNQACYDRAFPISH) the chain is on the extracellular side. The helical transmembrane segment at 76–98 (IRYWVFQIIMVCTPSLCFITYSV) threads the bilayer. The Cytoplasmic portion of the chain corresponds to 99-197 (HQSAKQRERR…KLRRQEGISR (99 aa)). Positions 117–141 (DRDPPESMGGPGGTGGGGSGGGKRE) are disordered. Gly residues predominate over residues 125–137 (GGPGGTGGGGSGG). The helical transmembrane segment at 198–220 (FYIIQVVFRNALEIGFLVGQYFL) threads the bilayer. The Extracellular portion of the chain corresponds to 221-252 (YGFSVPGLYECDRYPCIKEVECYVSRPTEKTV). The chain crosses the membrane as a helical span at residues 253–275 (FLVFMFAVSGICVVLNLAELNHL). Residues 276–321 (GWRKIKLAVRGAQAKRKSVYEIRNKDLPRVSVPNFGRTQSSDSAYV) lie on the Cytoplasmic side of the membrane.

It belongs to the connexin family. Delta-type subfamily. As to quaternary structure, a connexon is composed of a hexamer of connexins.

The protein localises to the cell membrane. It localises to the cell junction. It is found in the gap junction. One gap junction consists of a cluster of closely packed pairs of transmembrane channels, the connexons, through which materials of low MW diffuse from one cell to a neighboring cell. This chain is Gap junction delta-2 protein (GJD2), found in Bos taurus (Bovine).